A 215-amino-acid polypeptide reads, in one-letter code: uncharacterized protein (215 aa).

The signal sequence occupies residues 1-17 (MKKVLASATILSLMLVG). Residues 17–110 (GCSNGGNDES…NKQQQSVQDN (94 aa)) are disordered. C18 carries the N-palmitoyl cysteine lipid modification. The S-diacylglycerol cysteine moiety is linked to residue C18. Residues 25–62 (ESSHKDDSSKTEQKDKSSSQHDSKKDSKRNDTNNKQDN) show a composition bias toward basic and acidic residues. Low complexity-rich tracts occupy residues 63–76 (QENN…NNQN) and 91–110 (NSNG…VQDN).

It is found in the cell membrane. This is an uncharacterized protein from Staphylococcus epidermidis (strain ATCC 35984 / DSM 28319 / BCRC 17069 / CCUG 31568 / BM 3577 / RP62A).